The primary structure comprises 217 residues: Somatotropin (217 aa).

A signal peptide spans 1 to 26; it reads MMAAGPRTSLLLAFALLCLPWTQVVG. H46 lines the Zn(2+) pocket. A disulfide bond links C79 and C190. Phosphoserine is present on S132. E199 lines the Zn(2+) pocket. Residues C207 and C215 are joined by a disulfide bond.

This sequence belongs to the somatotropin/prolactin family.

Its subcellular location is the secreted. In terms of biological role, plays an important role in growth control. Its major role in stimulating body growth is to stimulate the liver and other tissues to secrete IGF1. It stimulates both the differentiation and proliferation of myoblasts. It also stimulates amino acid uptake and protein synthesis in muscle and other tissues. In Bubalus bubalis (Domestic water buffalo), this protein is Somatotropin (GH1).